The following is a 283-amino-acid chain: Pantothenate synthetase (283 aa).

Residue 31 to 38 participates in ATP binding; that stretch reads MGALHEGH. His38 (proton donor) is an active-site residue. A (R)-pantoate-binding site is contributed by Gln62. Gln62 contributes to the beta-alanine binding site. 148–151 is a binding site for ATP; the sequence is GKKD. Gln154 lines the (R)-pantoate pocket. Residues Val177 and 185–188 each bind ATP; that span reads RSSR.

It belongs to the pantothenate synthetase family. As to quaternary structure, homodimer.

It is found in the cytoplasm. The catalysed reaction is (R)-pantoate + beta-alanine + ATP = (R)-pantothenate + AMP + diphosphate + H(+). It functions in the pathway cofactor biosynthesis; (R)-pantothenate biosynthesis; (R)-pantothenate from (R)-pantoate and beta-alanine: step 1/1. Its function is as follows. Catalyzes the condensation of pantoate with beta-alanine in an ATP-dependent reaction via a pantoyl-adenylate intermediate. The protein is Pantothenate synthetase of Staphylococcus haemolyticus (strain JCSC1435).